A 257-amino-acid chain; its full sequence is Phosphonates import ATP-binding protein PhnC (257 aa).

In terms of domain architecture, ABC transporter spans 2–246; the sequence is IEFRNVSKVY…KFAEIYGDVA (245 aa). 35–42 is a binding site for ATP; it reads GLSGAGKS.

Belongs to the ABC transporter superfamily. Phosphonates importer (TC 3.A.1.9.1) family. As to quaternary structure, the complex is composed of two ATP-binding proteins (PhnC), two transmembrane proteins (PhnE) and a solute-binding protein (PhnD).

It is found in the cell membrane. The catalysed reaction is phosphonate(out) + ATP + H2O = phosphonate(in) + ADP + phosphate + H(+). Functionally, part of the ABC transporter complex PhnCDE involved in phosphonates import. Responsible for energy coupling to the transport system. This chain is Phosphonates import ATP-binding protein PhnC, found in Bacillus cereus (strain ATCC 10987 / NRS 248).